We begin with the raw amino-acid sequence, 398 residues long: ATP-dependent RNA helicase eIF4A (398 aa).

Residues 25 to 53 carry the Q motif motif; that stretch reads DSFDTMNLKPELLRGVYAYGFERPSAIQQ. Residues 56–226 form the Helicase ATP-binding domain; it reads IMPVIKGHDV…TKFMRDPVRI (171 aa). 69-76 is a binding site for ATP; the sequence is AQSGTGKT. The DEAD box motif lies at 174-177; the sequence is DEAD. In terms of domain architecture, Helicase C-terminal spans 237 to 398; sequence GIKQFYIAVE…EMPMNVADLI (162 aa).

The protein belongs to the DEAD box helicase family. eIF4A subfamily. As to quaternary structure, component of the eIF4F complex, which composition varies with external and internal environmental conditions. It is composed of at least eIF4A, eIF4E and eIF4G.

The protein localises to the cytoplasm. The catalysed reaction is ATP + H2O = ADP + phosphate + H(+). Its function is as follows. ATP-dependent RNA helicase which is a subunit of the eIF4F complex involved in cap recognition and is required for mRNA binding to ribosome. In the current model of translation initiation, eIF4A unwinds RNA secondary structures in the 5'-UTR of mRNAs which is necessary to allow efficient binding of the small ribosomal subunit, and subsequent scanning for the initiator codon. In Botryotinia fuckeliana (strain B05.10) (Noble rot fungus), this protein is ATP-dependent RNA helicase eIF4A (tif1).